We begin with the raw amino-acid sequence, 259 residues long: Ovulation prohormone (259 aa).

The signal sequence occupies residues 1–34 (MKMSGLLSKPDYGVVGIVFTVVFCCWCSSSTTHA). A propeptide spanning residues 35 to 102 (LSIAEPGRDR…SGEKTRLTAA (68 aa)) is cleaved from the precursor. The segment at 42–103 (RDRYDKRSPT…GEKTRLTAAK (62 aa)) is disordered. 2 repeats span residues 119 to 123 (RLRFH) and 146 to 150 (RLRFH). A 2 X 5 AA repeats of R-L-R-F-H region spans residues 119-150 (RLRFHKRRVDSADESNDDGFDRKAREPRLRFH). Positions 149-197 (FHDVRKRSATAEEGSENAEIEESHLGNSRSRRSAGSAPSSANEVQRSKR) are disordered. A propeptide spanning residues 181–195 (SAGSAPSSANEVQRS) is cleaved from the precursor. Leu-233 is modified (leucine amide). A propeptide spanning residues 237-259 (GSAFFDHIPIIFGEPQYDYQPFK) is cleaved from the precursor.

The protein belongs to the molluscan ELH family.

It is found in the secreted. Functionally, CDCH induces ovulation and egg-mass production; it may also stimulate synthesis of secretory products in the female accessory sex glands and affect neurons in the neuronal circuits controlling locomotion and feeding. In terms of biological role, calfluxin is involved in the influx of calcium into mitochondria of the albumen gland. Its function is as follows. CDCA (or alpha-CDCP) triggers the electrical activity of the caudodorsal cells (CDCS). This is Ovulation prohormone from Lymnaea stagnalis (Great pond snail).